The chain runs to 61 residues: Sperm protamine P1 (61 aa).

Residues 1–61 (MARYRHSRSR…RRYSRRRRRY (61 aa)) are disordered.

This sequence belongs to the protamine P1 family. In terms of tissue distribution, testis.

The protein localises to the nucleus. The protein resides in the chromosome. Its function is as follows. Protamines substitute for histones in the chromatin of sperm during the haploid phase of spermatogenesis. They compact sperm DNA into a highly condensed, stable and inactive complex. The chain is Sperm protamine P1 (PRM1) from Macropus giganteus (Eastern gray kangaroo).